A 215-amino-acid chain; its full sequence is UPF0488 protein C8orf33 homolog (215 aa).

3 disordered regions span residues Met1–Leu72, Leu87–Lys111, and Cys158–Pro199. Over residues Ala29–Lys39 the composition is skewed to basic residues. Residues Ala40–Thr63 show a composition bias toward basic and acidic residues. 2 stretches are compositionally biased toward basic and acidic residues: residues Glu167–Gly178 and Thr188–Pro199.

Belongs to the UPF0488 family.

This Danio rerio (Zebrafish) protein is UPF0488 protein C8orf33 homolog.